A 64-amino-acid polypeptide reads, in one-letter code: Large ribosomal subunit protein bL33 (64 aa).

This sequence belongs to the bacterial ribosomal protein bL33 family.

In Rippkaea orientalis (strain PCC 8801 / RF-1) (Cyanothece sp. (strain PCC 8801)), this protein is Large ribosomal subunit protein bL33.